Reading from the N-terminus, the 814-residue chain is G-type lectin S-receptor-like serine/threonine-protein kinase At1g61400 (814 aa).

The N-terminal stretch at 1–34 is a signal peptide; it reads MDFLFLLLERKNKHMGKKRVVLLWLSIFISFSSA. Positions 35–154 constitute a Bulb-type lectin domain; the sequence is EITEESPLSI…VSGRTLWESF (120 aa). Topologically, residues 35–436 are extracellular; sequence EITEESPLSI…ELDVNKRKKT (402 aa). Asn63, Asn104, Asn127, and Asn246 each carry an N-linked (GlcNAc...) asparagine glycan. In terms of domain architecture, EGF-like; atypical spans 288-324; that stretch reads PANSCDIYGVCGPFGFCVISVPPKCKCFKGFIPKSIE. 2 disulfide bridges follow: Cys292–Cys304 and Cys298–Cys312. Asn330, Asn346, and Asn385 each carry an N-linked (GlcNAc...) asparagine glycan. The PAN domain maps to 343-425; sequence CQGNSTGKDA…GELLSIRLAR (83 aa). 2 cysteine pairs are disulfide-bonded: Cys378-Cys399 and Cys382-Cys388. The chain crosses the membrane as a helical span at residues 437-457; sequence IIAITVSLTLFVILGFTAFGF. The Cytoplasmic portion of the chain corresponds to 458-814; sequence WRRRVEQNAL…EMTESVIHGR (357 aa). A Protein kinase domain is found at 500–785; that stretch reads FSLSNKLGHG…DLPLPKQPTF (286 aa). ATP contacts are provided by residues 506 to 514 and Lys528; that span reads LGHGGFGSV. Residues Ser534 and Ser549 each carry the phosphoserine modification. The segment at 589-606 is caM-binding; it reads KKRLEIDWPKRFDIIQGI. Residue Asp625 is the Proton acceptor of the active site. A phosphoserine mark is found at Ser629 and Ser642. A Phosphothreonine modification is found at Thr659. Phosphoserine occurs at positions 702 and 796.

This sequence belongs to the protein kinase superfamily. Ser/Thr protein kinase family.

The protein resides in the cell membrane. The catalysed reaction is L-seryl-[protein] + ATP = O-phospho-L-seryl-[protein] + ADP + H(+). It carries out the reaction L-threonyl-[protein] + ATP = O-phospho-L-threonyl-[protein] + ADP + H(+). The protein is G-type lectin S-receptor-like serine/threonine-protein kinase At1g61400 of Arabidopsis thaliana (Mouse-ear cress).